A 443-amino-acid polypeptide reads, in one-letter code: Signal recognition particle 54 kDa protein (443 aa).

GTP is bound by residues 107–114 (GIQGSGKT), 189–193 (DTAGR), and 247–250 (TKLD).

It belongs to the GTP-binding SRP family. SRP54 subfamily. Part of the signal recognition particle protein translocation system, which is composed of SRP and FtsY. Archaeal SRP consists of a 7S RNA molecule of 300 nucleotides and two protein subunits: SRP54 and SRP19.

It localises to the cytoplasm. The enzyme catalyses GTP + H2O = GDP + phosphate + H(+). Involved in targeting and insertion of nascent membrane proteins into the cytoplasmic membrane. Binds to the hydrophobic signal sequence of the ribosome-nascent chain (RNC) as it emerges from the ribosomes. The SRP-RNC complex is then targeted to the cytoplasmic membrane where it interacts with the SRP receptor FtsY. This chain is Signal recognition particle 54 kDa protein, found in Pyrococcus furiosus (strain ATCC 43587 / DSM 3638 / JCM 8422 / Vc1).